The sequence spans 213 residues: MAPAQRPLLPLLLLLLPLPPPPFARAEDAARANSDRYAVYWNRSNPRFHAGAGDDGGGYTVEVSINDYLDIYCPHYGAPLPPAERMEHYVLYMVNGEGHASCDHRQRGFKRWECNRPAAPGGPLKFSEKFQLFTPFSLGFEFRPGHEYYYISATPPNAVDRPCLRLKVYVRPTNETLYEAPEPIFTSNNSCSSPGGCRLFLSTIPVLWTLLGS.

The N-terminal stretch at 1–24 (MAPAQRPLLPLLLLLLPLPPPPFA) is a signal peptide. Positions 34–174 (SDRYAVYWNR…RLKVYVRPTN (141 aa)) constitute an Ephrin RBD domain. N42 is a glycosylation site (N-linked (GlcNAc...) asparagine). Disulfide bonds link C73-C114 and C102-C163. N-linked (GlcNAc...) asparagine glycans are attached at residues N174 and N188. Residue N188 is the site of GPI-anchor amidated asparagine attachment. A propeptide spans 189 to 213 (NSCSSPGGCRLFLSTIPVLWTLLGS) (removed in mature form).

The protein belongs to the ephrin family. As to quaternary structure, binds to the receptor tyrosine kinases EPHA3, EPHA4 and EPHA5. Interacts with EPHA8; activates EPHA8.

It localises to the cell membrane. Cell surface GPI-bound ligand for Eph receptors, a family of receptor tyrosine kinases which are crucial for migration, repulsion and adhesion during neuronal, vascular and epithelial development. Binds promiscuously Eph receptors residing on adjacent cells, leading to contact-dependent bidirectional signaling into neighboring cells. The signaling pathway downstream of the receptor is referred to as forward signaling while the signaling pathway downstream of the ephrin ligand is referred to as reverse signaling. With the EPHA2 receptor may play a role in bone remodeling through regulation of osteoclastogenesis and osteoblastogenesis. This chain is Ephrin-A2 (EFNA2), found in Homo sapiens (Human).